A 369-amino-acid chain; its full sequence is tRNA 2-selenouridine synthase (369 aa).

Positions 15–138 (FIAGQPLIDL…MRQYLIGVIE (124 aa)) constitute a Rhodanese domain. The active-site S-selanylcysteine intermediate is the Cys98.

It belongs to the SelU family. In terms of assembly, monomer.

The enzyme catalyses 5-methylaminomethyl-2-thiouridine(34) in tRNA + selenophosphate + (2E)-geranyl diphosphate + H2O + H(+) = 5-methylaminomethyl-2-selenouridine(34) in tRNA + (2E)-thiogeraniol + phosphate + diphosphate. It carries out the reaction 5-methylaminomethyl-2-thiouridine(34) in tRNA + (2E)-geranyl diphosphate = 5-methylaminomethyl-S-(2E)-geranyl-thiouridine(34) in tRNA + diphosphate. The catalysed reaction is 5-methylaminomethyl-S-(2E)-geranyl-thiouridine(34) in tRNA + selenophosphate + H(+) = 5-methylaminomethyl-2-(Se-phospho)selenouridine(34) in tRNA + (2E)-thiogeraniol. It catalyses the reaction 5-methylaminomethyl-2-(Se-phospho)selenouridine(34) in tRNA + H2O = 5-methylaminomethyl-2-selenouridine(34) in tRNA + phosphate. Its function is as follows. Involved in the post-transcriptional modification of the uridine at the wobble position (U34) of tRNA(Lys), tRNA(Glu) and tRNA(Gln). Catalyzes the conversion of 2-thiouridine (S2U-RNA) to 2-selenouridine (Se2U-RNA). Acts in a two-step process involving geranylation of 2-thiouridine (S2U) to S-geranyl-2-thiouridine (geS2U) and subsequent selenation of the latter derivative to 2-selenouridine (Se2U) in the tRNA chain. The polypeptide is tRNA 2-selenouridine synthase (Shewanella sp. (strain MR-7)).